Reading from the N-terminus, the 228-residue chain is Death domain-containing membrane protein NRADD (228 aa).

The Extracellular segment spans residues 1 to 52 (MLYNVSKGVVYSDTALQGQDGDREGMWVGAGGALAPNTSSLFPPEPPGASSN). 2 N-linked (GlcNAc...) asparagine glycosylation sites follow: Asn-4 and Asn-37. Residues 53–73 (IIPVYCALLATVILGLLAYVA) form a helical; Signal-anchor for type III membrane protein membrane-spanning segment. At 74-228 (FKCWRSHKQR…SSPAESSSVV (155 aa)) the chain is on the cytoplasmic side. Positions 87-122 (AKARTVELGDPDRDQRRGDSNVFVDSPPSLEPCIPS) are disordered. Over residues 90–105 (RTVELGDPDRDQRRGD) the composition is skewed to basic and acidic residues. In terms of domain architecture, Death spans 143–222 (EEVQRLLMMG…DVVQVLSSPA (80 aa)).

In terms of assembly, interacts with NGFR. Interacts with NTRK1. Interacts with SORT1. As to expression, detected in lung and testis.

It is found in the cell membrane. It localises to the nucleus. Modulates NTRK1 signaling. Can activate several intracellular signaling pathways, leading to activation of JUN. Promotes apoptosis. Promotes translocation of SORT1 to the cell membrane, and thereby hinders lysosomal degradation of SOTR1 and promotes its interaction with NGFR. This Mus musculus (Mouse) protein is Death domain-containing membrane protein NRADD (Nradd).